The following is a 448-amino-acid chain: Argininosuccinate synthase (448 aa).

Residues 17–25 (AFSGGLDTS) and Ala-43 contribute to the ATP site. Residue Tyr-99 participates in L-citrulline binding. The ATP site is built by Gly-129 and Thr-131. 3 residues coordinate L-aspartate: Thr-131, Asn-135, and Asp-136. L-citrulline is bound at residue Asn-135. Asp-136 provides a ligand contact to ATP. The L-citrulline site is built by Arg-139 and Ser-192. Asp-194 contacts ATP. L-citrulline is bound by residues Thr-201, Glu-203, and Glu-280.

This sequence belongs to the argininosuccinate synthase family. Type 2 subfamily. As to quaternary structure, homotetramer.

The protein resides in the cytoplasm. The enzyme catalyses L-citrulline + L-aspartate + ATP = 2-(N(omega)-L-arginino)succinate + AMP + diphosphate + H(+). It participates in amino-acid biosynthesis; L-arginine biosynthesis; L-arginine from L-ornithine and carbamoyl phosphate: step 2/3. The sequence is that of Argininosuccinate synthase from Bradyrhizobium sp. (strain ORS 278).